A 102-amino-acid polypeptide reads, in one-letter code: Small ribosomal subunit protein uS10 (102 aa).

The protein belongs to the universal ribosomal protein uS10 family. Part of the 30S ribosomal subunit.

Its function is as follows. Involved in the binding of tRNA to the ribosomes. In Rhodopseudomonas palustris (strain BisB18), this protein is Small ribosomal subunit protein uS10.